The chain runs to 240 residues: Uridylate cyclase (240 aa).

The Guanylate cyclase domain occupies 45–180 (TYLYADMANS…RAPNLAAKLS (136 aa)). Y48 contacts a ribonucleoside 5'-triphosphate. Positions 50 and 94 each coordinate Mn(2+). Residue R95 participates in a ribonucleoside 5'-triphosphate binding.

The protein belongs to the adenylyl cyclase class-4/guanylyl cyclase family. Pyrimidine cyclase subfamily. As to quaternary structure, homodimer. The cofactor is Mn(2+).

The protein resides in the cytoplasm. The catalysed reaction is UTP = 3',5'-cyclic UMP + diphosphate. Its function is as follows. Pycsar (pyrimidine cyclase system for antiphage resistance) provides immunity against bacteriophage. The pyrimidine cyclase (PycC) synthesizes cyclic nucleotides in response to infection; these serve as specific second messenger signals. The signals activate the adjacent effector, leading to bacterial cell death and abortive phage infection. A clade B Pycsar system. The pyrimidine cyclase gene of a two-gene Pycsar system, weakly generates cyclic UMP (cUMP) from UTP, has little to no activity on ATP, CTP or GTP. Expression of this and adjacent effector RsmPycTM (AC A0A1V0HUU2) probably confers resistance to bacteriophage. The genes are probably only expressed in response to bacteriophage infection. This is Uridylate cyclase from Rhodovulum sp. (strain MB263).